The sequence spans 338 residues: Lipoate-protein ligase A (338 aa).

The region spanning 29-216 (SPNQRVLFLW…AFFAYYDEQV (188 aa)) is the BPL/LPL catalytic domain. Residues Arg-71, 76–79 (GAVF), and Lys-134 contribute to the ATP site. Lys-134 lines the (R)-lipoate pocket.

This sequence belongs to the LplA family. In terms of assembly, monomer.

The protein resides in the cytoplasm. It carries out the reaction L-lysyl-[lipoyl-carrier protein] + (R)-lipoate + ATP = N(6)-[(R)-lipoyl]-L-lysyl-[lipoyl-carrier protein] + AMP + diphosphate + H(+). It participates in protein modification; protein lipoylation via exogenous pathway; protein N(6)-(lipoyl)lysine from lipoate: step 1/2. It functions in the pathway protein modification; protein lipoylation via exogenous pathway; protein N(6)-(lipoyl)lysine from lipoate: step 2/2. Catalyzes both the ATP-dependent activation of exogenously supplied lipoate to lipoyl-AMP and the transfer of the activated lipoyl onto the lipoyl domains of lipoate-dependent enzymes. The polypeptide is Lipoate-protein ligase A (Yersinia pseudotuberculosis serotype O:1b (strain IP 31758)).